The following is a 332-amino-acid chain: Melanocortin receptor 4 (332 aa).

At 1–43 (MNSTHHHGMYTSLHLWNRSSYGLHGNASESLGKGHPDGGCYEQ) the chain is on the extracellular side. Asn2, Asn17, and Asn26 each carry an N-linked (GlcNAc...) asparagine glycan. Cystine bridges form between Cys40–Cys279 and Cys271–Cys277. Residues 44–69 (LFVSPEVFVTLGVISLLENILVIVAI) traverse the membrane as a helical segment. Topologically, residues 70–81 (AKNKNLHSPMYF) are cytoplasmic. Residues 82-106 (FICSLAVADMLVSVSNGSETIVITL) form a helical membrane-spanning segment. Glu100 contacts Ca(2+). Residues 107–123 (LNSTDTDAQSFTVNIDN) are Extracellular-facing. The N-linked (GlcNAc...) asparagine glycan is linked to Asn108. Residues Asp122 and Asp126 each contribute to the Ca(2+) site. The helical transmembrane segment at 124 to 145 (VIDSVICSSLLASICSLLSIAV) threads the bilayer. The Cytoplasmic portion of the chain corresponds to 146-165 (DRYFTIFYALQYHNIMTVRR). Residues 166–186 (VGIIISCIWAACTVSGVLFII) form a helical membrane-spanning segment. At 187–191 (YSDSS) the chain is on the extracellular side. A helical transmembrane segment spans residues 192-215 (AVIICLISMFFTMLVLMASLYVHM). At 216–248 (FLMARLHIKRIAVLPGTGTIRQGTNMKGAITLT) the chain is on the cytoplasmic side. The helical transmembrane segment at 249–271 (ILIGVFVVCWAPFFLHLLFYISC) threads the bilayer. The Extracellular segment spans residues 272-280 (PQNPYCVCF). A helical transmembrane segment spans residues 281-304 (MSHFNLYLILIMCNAVIDPLIYAL). Topologically, residues 305 to 332 (RSQELRKTFKEIICFYPLGGICELSSRY) are cytoplasmic. Residue Cys318 is the site of S-palmitoyl cysteine attachment.

This sequence belongs to the G-protein coupled receptor 1 family. Homodimer; disulfide-linked, also forms higher order oligomers. Interacts with GNAS. Interacts with ATRNL1. Interacts with MGRN1; this interaction competes with GNAS-binding and thus inhibits agonist-induced cAMP production. Interacts with MRAP and MRAP2; these associated factors increase ligand-sensitivity and generation of cAMP.

It is found in the cell membrane. Functionally, hormone receptor that acts as a key component of the leptin-melanocortin pathway at the intersection of homeostatic maintenance of energetic state. Plays a role in regulating food intake: activation by a stimulating hormone such as anorexigenic alpha-melanocyte stimulating hormone (alpha-MSH) inhibits appetite, whereas binding to a natural antagonist like Agouti-related protein/AGRP promotes appetite. G-protein-coupled receptor that activates conventional Galphas signaling leading to induction of anorexogenic signaling in the hypothalamus to result in negative energy balance. Regulates the firing activity of neurons from the hypothalamus by alpha-MSH and AGRP independently of Galphas signaling by ligand-induced coupling of closure of inwardly rectifying potassium channel KCNJ13. In intestinal epithelial cells, plays a role in the inhibition of hepatic glucose production via nesfatin-1/NUCB2 leading to increased cyclic adenosine monophosphate (cAMP) levels and glucagon-like peptide 1 (GLP-1) secretion in the intestinal epithelium. This is Melanocortin receptor 4 (Mc4r) from Mus musculus (Mouse).